Reading from the N-terminus, the 401-residue chain is Argininosuccinate synthase (401 aa).

ATP is bound by residues 10–18 and alanine 38; that span reads AYSGGVDTS. Tyrosine 89 is an L-citrulline binding site. Residue glycine 119 participates in ATP binding. The L-aspartate site is built by threonine 121, asparagine 125, and aspartate 126. Asparagine 125 contributes to the L-citrulline binding site. Residues arginine 129, serine 177, serine 186, glutamate 262, and tyrosine 274 each contribute to the L-citrulline site.

It belongs to the argininosuccinate synthase family. Type 1 subfamily. As to quaternary structure, homotetramer.

The protein localises to the cytoplasm. It catalyses the reaction L-citrulline + L-aspartate + ATP = 2-(N(omega)-L-arginino)succinate + AMP + diphosphate + H(+). It participates in amino-acid biosynthesis; L-arginine biosynthesis; L-arginine from L-ornithine and carbamoyl phosphate: step 2/3. In Prochlorococcus marinus (strain MIT 9303), this protein is Argininosuccinate synthase.